Consider the following 447-residue polypeptide: MLKKQTAGLVLWGAIIFVGWNALLLLFFWTRPAPGRLPSDSALGDDPASLTREVIHLAEDAEAELERQRGLLQQIKEHYALWRQRWRVPTVAPPAWPRVPVTPSPVQIPILVIACDRSTVRRCLDKLLHYRPSAERFPIIVSQDCGHEETAQVIASYGTAVTHIRQPDLSNIAVQPDHRKFQGYYKIARHYRWALGQIFNKFKFPAAVVVEDDLEVAPDFFEYFQATYPLLRTDPSLWCVSAWNDNGKEQMVDSSKPELLYRTDFFPGLGWLLLADLWAELEPKWPKAFWDDWMRRPEQRKGRACIRPEISRTMTFGRKGVSHGQFFDQHLKFIKLNQQFVPFTQLDLSYLQQEAYDRDFLAQVYGAPQLQVEKVRTNDQKELGEVRVQYTSRDSFKAFAKALGVMDDLKSGVPRAGYRGIVTFQFRGRRVHLAPPQTWTGYDPSWN.

The Cytoplasmic segment spans residues 1-6 (MLKKQT). The chain crosses the membrane as a helical; Signal-anchor for type II membrane protein span at residues 7–29 (AGLVLWGAIIFVGWNALLLLFFW). Over 30–447 (TRPAPGRLPS…TWTGYDPSWN (418 aa)) the chain is Lumenal. An intrachain disulfide couples cysteine 115 to cysteine 145. Substrate contacts are provided by arginine 117, aspartate 144, histidine 190, and aspartate 212. Aspartate 213 lines the Mn(2+) pocket. A disulfide bond links cysteine 239 and cysteine 305. The active-site Proton acceptor is aspartate 291. Serine 322 lines the substrate pocket.

This sequence belongs to the glycosyltransferase 13 family. In terms of assembly, interacts with MGAT4D. Interacts with BRI3. The cofactor is Mn(2+). In terms of tissue distribution, detected in kidney, liver and brain.

Its subcellular location is the golgi apparatus membrane. It is found in the cytoplasm. The protein resides in the perinuclear region. It catalyses the reaction N(4)-(alpha-D-Man-(1-&gt;3)-[alpha-D-Man-(1-&gt;3)-[alpha-D-Man-(1-&gt;6)]-alpha-D-Man-(1-&gt;6)]-beta-D-Man-(1-&gt;4)-beta-D-GlcNAc-(1-&gt;4)-beta-D-GlcNAc)-L-asparaginyl-[protein] (N-glucan mannose isomer 5A1,2) + UDP-N-acetyl-alpha-D-glucosamine = N(4)-{beta-D-GlcNAc-(1-&gt;2)-alpha-D-Man-(1-&gt;3)-[alpha-D-Man-(1-&gt;3)-[alpha-D-Man-(1-&gt;6)]-alpha-D-Man-(1-&gt;6)]-beta-D-Man-(1-&gt;4)-beta-D-GlcNAc-(1-&gt;4)-beta-D-GlcNAc}-L-asparaginyl-[protein] + UDP + H(+). Its pathway is protein modification; protein glycosylation. Initiates complex N-linked carbohydrate formation. Essential for the conversion of high-mannose to hybrid and complex N-glycans. The protein is Alpha-1,3-mannosyl-glycoprotein 2-beta-N-acetylglucosaminyltransferase (Mgat1) of Mus musculus (Mouse).